We begin with the raw amino-acid sequence, 273 residues long: MSLTNTKTGFSVKDILDLPDTNDEEGSVAEGPEEESEGPEPAKRAGPLGQGALDAVHSLPLKSPFYDSSDNPYTRWLASTEGLQYSLHGLAASAPPQDSSSKSPEPSADESPDNDKETPGGGGDAGKKRKRRVLFSKAQTYELERRFRQQRYLSAPEREHLASLIRLTPTQVKIWFQNHRYKMKRARAEKGMEVTPLPSPRCVAVPVLVRDGKPCHALKAQDLAAATFQAGIPFSAYSAQSLQHMQYNAQYSSASTPQYPTAHPLVQAQQWTW.

Disordered stretches follow at residues 1-56 (MSLT…LDAV) and 91-131 (AASA…KRKR). The span at 20 to 38 (DTNDEEGSVAEGPEEESEG) shows a compositional bias: acidic residues. A DNA-binding region (homeobox) is located at residues 128–187 (KRKRRVLFSKAQTYELERRFRQQRYLSAPEREHLASLIRLTPTQVKIWFQNHRYKMKRAR).

It belongs to the NK-2 homeobox family. Interacts with OLIG2.

The protein resides in the nucleus. Functionally, transcriptional activator involved in the development of insulin-producting beta cells in the endocrine pancreas. May also be involved in specifying diencephalic neuromeric boundaries, and in controlling the expression of genes that play a role in axonal guidance. Binds to elements within the NEUROD1 promoter. This chain is Homeobox protein Nkx-2.2 (NKX2-2), found in Mesocricetus auratus (Golden hamster).